Consider the following 421-residue polypeptide: Large ribosomal subunit protein uL4 (421 aa).

At A2 the chain carries N-acetylalanine. K14 is subject to N6-acetyllysine. The residue at position 97 (R97) is an Omega-N-methylarginine. The residue at position 106 (K106) is an N6-acetyllysine. Residue K239 forms a Glycyl lysine isopeptide (Lys-Gly) (interchain with G-Cter in SUMO2) linkage. Position 259 is an N6-acetyllysine (K259). Position 266 is a phosphothreonine (T266). A phosphoserine mark is found at S290 and S295. R300 is modified (citrulline). K327 is covalently cross-linked (Glycyl lysine isopeptide (Lys-Gly) (interchain with G-Cter in SUMO2)). An N6-acetyllysine mark is found at K333 and K353. Position 364 is an N6-acetyllysine; alternate (K364). K364 participates in a covalent cross-link: Glycyl lysine isopeptide (Lys-Gly) (interchain with G-Cter in SUMO1); alternate. S365 carries the phosphoserine modification. A compositionally biased stretch (basic and acidic residues) spans 365–379 (SEKIVPEKGAGDKKP). Residues 365-421 (SEKIVPEKGAGDKKPAVGKKGKKPVDAKKLKKPAGKKVVTKKPAEKKPTTEEKKSAA) are disordered. Over residues 393-404 (KLKKPAGKKVVT) the composition is skewed to basic residues. Residues 406–421 (KPAEKKPTTEEKKSAA) show a composition bias toward basic and acidic residues.

It belongs to the universal ribosomal protein uL4 family. Component of the large ribosomal subunit. May bind IPO9 with low affinity. Interacts with RBM3. In terms of processing, citrullinated by PADI4.

It is found in the cytoplasm. In terms of biological role, component of the large ribosomal subunit. The ribosome is a large ribonucleoprotein complex responsible for the synthesis of proteins in the cell. The chain is Large ribosomal subunit protein uL4 (Rpl4) from Rattus norvegicus (Rat).